The primary structure comprises 66 residues: COP9 signalosome complex subunit 6a (66 aa).

This sequence belongs to the peptidase M67A family. CSN6 subfamily. As to quaternary structure, component of the CSN complex, probably composed of CSN1, CSN2, CSN3, CSN4, CSN5 (CSN5A or CSN5B), CSN6 (CSN6A or CSN6B), CSN7 and CSN8.

Its subcellular location is the cytoplasm. It is found in the nucleus. Component of the COP9 signalosome complex (CSN), a complex involved in various cellular and developmental processes such as photomorphogenesis and auxin and jasmonate responses. The CSN complex is an essential regulator of the ubiquitin (Ubl) conjugation pathway by mediating the deneddylation of the cullin subunits of SCF-type E3 ligase complexes, leading to decrease the Ubl ligase activity of SCF. It is involved in repression of photomorphogenesis in darkness by regulating the activity of COP1-containing Ubl ligase complexes. In Brassica oleracea (Wild cabbage), this protein is COP9 signalosome complex subunit 6a (CSN6A).